Consider the following 548-residue polypeptide: Ankyrin repeat domain-containing protein SOWAHA (548 aa).

Positions methionine 1–alanine 19 are cleaved as a signal peptide. The tract at residues glutamate 114–lysine 212 is disordered. The span at serine 136 to threonine 153 shows a compositional bias: polar residues. Residues glycine 198–lysine 212 are compositionally biased toward pro residues. The residue at position 258 (serine 258) is a Phosphoserine. ANK repeat units lie at residues serine 344–alanine 373 and glycine 383–valine 413. A disordered region spans residues proline 512–threonine 548.

Belongs to the SOWAH family.

In Mus musculus (Mouse), this protein is Ankyrin repeat domain-containing protein SOWAHA (Sowaha).